Consider the following 105-residue polypeptide: uncharacterized protein (105 aa).

The chain crosses the membrane as a helical span at residues 8–28; that stretch reads FMTAGIIIALIIAVLAPFLAS. The interval 32 to 53 is disordered; the sequence is DGLESTAEKVMPNPETEPVLES. A helical transmembrane segment spans residues 72–92; sequence VSMVIGTILVLAIAYGVGAVF.

To M.jannaschii MJ1570.

The protein resides in the cell membrane. This is an uncharacterized protein from Methanothermobacter thermautotrophicus (strain ATCC 29096 / DSM 1053 / JCM 10044 / NBRC 100330 / Delta H) (Methanobacterium thermoautotrophicum).